We begin with the raw amino-acid sequence, 191 residues long: Ion-translocating oxidoreductase complex subunit B (191 aa).

The tract at residues 1–26 (MSLVLVAVLALLGLCLIAGAILGFAA) is hydrophobic. One can recognise a 4Fe-4S domain in the interval 32-90 (EGDPIAEQINALLPQTQCGQCGYPGCKPYAEAIAGGDKINKCPPGGEATIQALADLLDV). [4Fe-4S] cluster-binding residues include cysteine 49, cysteine 52, cysteine 57, cysteine 73, cysteine 114, cysteine 117, cysteine 120, cysteine 124, cysteine 144, cysteine 147, cysteine 150, and cysteine 154. 4Fe-4S ferredoxin-type domains are found at residues 105–134 (MVAF…GAAR) and 135–164 (QMHT…MIEV).

Belongs to the 4Fe4S bacterial-type ferredoxin family. RnfB subfamily. As to quaternary structure, the complex is composed of six subunits: RnfA, RnfB, RnfC, RnfD, RnfE and RnfG. [4Fe-4S] cluster serves as cofactor.

It is found in the cell inner membrane. Functionally, part of a membrane-bound complex that couples electron transfer with translocation of ions across the membrane. The sequence is that of Ion-translocating oxidoreductase complex subunit B from Ectopseudomonas mendocina (strain ymp) (Pseudomonas mendocina).